Here is a 503-residue protein sequence, read N- to C-terminus: Cysteine desulfurase, mitochondrial (503 aa).

The N-terminal 27 residues, 1–27, are a transit peptide targeting the mitochondrion; it reads MSNIAPQVLRHASRACSRRLSLSASLV. The segment covering 34 to 50 has biased composition (low complexity); it reads RTVTGSGSGGRRYVSGS. Positions 34 to 58 are disordered; sequence RTVTGSGSGGRRYVSGSQRHNAQAQ. Pyridoxal 5'-phosphate-binding positions include 172–173, asparagine 254, glutamine 282, and 302–304; these read AT and SGH. Lysine 305 is modified (N6-(pyridoxal phosphate)lysine). Residue threonine 342 participates in pyridoxal 5'-phosphate binding. Cysteine 427 (cysteine persulfide intermediate) is an active-site residue. Cysteine 427 serves as a coordination point for [2Fe-2S] cluster.

This sequence belongs to the class-V pyridoxal-phosphate-dependent aminotransferase family. NifS/IscS subfamily. Requires pyridoxal 5'-phosphate as cofactor.

Its subcellular location is the mitochondrion. It carries out the reaction (sulfur carrier)-H + L-cysteine = (sulfur carrier)-SH + L-alanine. Catalyzes the removal of elemental sulfur from cysteine to produce alanine. It supplies the inorganic sulfur for iron-sulfur (Fe-S) clusters. Plays a role in both tRNA-processing and mitochondrial metabolism. Involved in the 2-thio-modification of both 5-carboxymethylaminomethyl-2-thiouridine in mitochondrial tRNAs and 5-methoxycarbonylmethyl-2-thiouridine (mcm5s2U) in cytoplasmic tRNAs. The protein is Cysteine desulfurase, mitochondrial of Arthroderma benhamiae (strain ATCC MYA-4681 / CBS 112371) (Trichophyton mentagrophytes).